The primary structure comprises 341 residues: Probable alcohol acetyltransferase (341 aa).

The transit peptide at 1–40 (MFASRILRNSAQTLKTELPHKETIKMAYDLHKPRSTAIRH) directs the protein to the mitochondrion. One can recognise an AB hydrolase-1 domain in the interval 48–301 (PILFLHGIFG…NSNHDILDQR (254 aa)). Residues serine 121, aspartate 145, and histidine 295 each act as charge relay system in the active site.

This sequence belongs to the AB hydrolase superfamily.

The protein localises to the mitochondrion. In terms of biological role, probable alcohol acetyltransferase that uses acetyl-CoA to synthesize acetate esters from various alcohols. Not involved in the synthesis of ethyl acetate. This Wickerhamomyces anomalus (strain ATCC 58044 / CBS 1984 / NCYC 433 / NRRL Y-366-8) (Yeast) protein is Probable alcohol acetyltransferase (EAT2).